The following is a 484-amino-acid chain: Phosphoenolpyruvate carboxylase (484 aa).

It belongs to the PEPCase type 2 family. In terms of assembly, homotetramer. Mg(2+) is required as a cofactor.

The catalysed reaction is oxaloacetate + phosphate = phosphoenolpyruvate + hydrogencarbonate. Its function is as follows. Catalyzes the irreversible beta-carboxylation of phosphoenolpyruvate (PEP) to form oxaloacetate (OAA), a four-carbon dicarboxylic acid source for the tricarboxylic acid cycle. The chain is Phosphoenolpyruvate carboxylase from Methanospirillum hungatei JF-1 (strain ATCC 27890 / DSM 864 / NBRC 100397 / JF-1).